A 384-amino-acid polypeptide reads, in one-letter code: MSWQEKINAALDARRAADALRRRYPVAQGAGRWLVADDRQYLNFSSNDYLGLSHHPQIIRAWQQGAEQFGVGSGGSGHVSGYSVAHQALEEELAEWLGYSRALLFISGFAANQAVIAAMMAKEDRIAADRLSHASLLEAASLSPSQLRRFAHNDVTHLARLLASPCPGQQMVVTEGVFSMDGDSAPLAEIQQVTQQHNGWLMVDDAHGTGVIGEQGRGSCWLQKVKPELLVVTFGKGFGVSGAAVLCSSTVADYLLQFARHLIYSTSMPPAQAQALRASLAVIRSEEGDARREKLAALITRFRAGVQGSPFTLADSRSAIQPLIVGDNSRALQLAEKLRQQGCWVTAIRPPTVPAGTARLRLTLTAAHEMQDIDRLLEMLHGNG.

Arginine 21 lines the substrate pocket. 108–109 (GF) contacts pyridoxal 5'-phosphate. Histidine 133 is a substrate binding site. Positions 179, 207, and 233 each coordinate pyridoxal 5'-phosphate. Lysine 236 carries the post-translational modification N6-(pyridoxal phosphate)lysine. A substrate-binding site is contributed by threonine 352.

It belongs to the class-II pyridoxal-phosphate-dependent aminotransferase family. BioF subfamily. Homodimer. Pyridoxal 5'-phosphate serves as cofactor.

It carries out the reaction 6-carboxyhexanoyl-[ACP] + L-alanine + H(+) = (8S)-8-amino-7-oxononanoate + holo-[ACP] + CO2. The protein operates within cofactor biosynthesis; biotin biosynthesis. Catalyzes the decarboxylative condensation of pimeloyl-[acyl-carrier protein] and L-alanine to produce 8-amino-7-oxononanoate (AON), [acyl-carrier protein], and carbon dioxide. This Escherichia coli O8 (strain IAI1) protein is 8-amino-7-oxononanoate synthase.